The chain runs to 226 residues: Ribonuclease 3 (226 aa).

Residues 6–128 enclose the RNase III domain; the sequence is INRLQRKLGY…LIGGIFLDSD (123 aa). Glu41 contributes to the Mg(2+) binding site. Asp45 is a catalytic residue. Mg(2+)-binding residues include Asp114 and Glu117. The active site involves Glu117. The 71-residue stretch at 155 to 225 folds into the DRBM domain; sequence DPKTRLQEYL…AEQALKQLEL (71 aa).

The protein belongs to the ribonuclease III family. In terms of assembly, homodimer. The cofactor is Mg(2+).

It localises to the cytoplasm. It catalyses the reaction Endonucleolytic cleavage to 5'-phosphomonoester.. In terms of biological role, digests double-stranded RNA. Involved in the processing of primary rRNA transcript to yield the immediate precursors to the large and small rRNAs (23S and 16S). Processes some mRNAs, and tRNAs when they are encoded in the rRNA operon. Processes pre-crRNA and tracrRNA of type II CRISPR loci if present in the organism. This chain is Ribonuclease 3, found in Yersinia enterocolitica serotype O:8 / biotype 1B (strain NCTC 13174 / 8081).